A 797-amino-acid chain; its full sequence is N-acetylneuraminate (7)9-O-acetyltransferase (797 aa).

At 1 to 18 the chain is on the cytoplasmic side; that stretch reads MAALAYNLGKREINHYFS. A helical transmembrane segment spans residues 19 to 39; it reads VRSAKVLALVAVLLLAACHLA. The Lumenal portion of the chain corresponds to 40–313; sequence SRRYRGNDSC…QPRPPLTLIQ (274 aa). The N-linked (GlcNAc...) asparagine glycan is linked to asparagine 46. Serine 94 acts as the Acyl-ester intermediate in catalysis. N-linked (GlcNAc...) asparagine glycosylation is found at asparagine 175 and asparagine 187. Catalysis depends on residues aspartate 270 and histidine 273. The helical transmembrane segment at 314-334 threads the bilayer; that stretch reads KLAACFFTLSIIGYFIFYVIH. Over 335-363 the chain is Cytoplasmic; it reads RNAHRKNKPCTDLESGEEKKNIINTPVSS. Residues 364–384 traverse the membrane as a helical segment; the sequence is LEILLQSFCKLGLIMAYFYMC. Residues 385 to 395 lie on the Lumenal side of the membrane; that stretch reads DRANLFMKENK. A helical membrane pass occupies residues 396–416; that stretch reads FYTHSSFFIPIIYILVLGVFY. At 417 to 439 the chain is on the cytoplasmic side; it reads NENTKETKVLNREQTDEWKGWMQ. The chain crosses the membrane as a helical span at residues 440 to 460; it reads LVILIYHISGASTFLPVYMHI. Residue arginine 461 is a topological domain, lumenal. Residues 462–482 traverse the membrane as a helical segment; sequence VLVAAYLFQTGYGHFSYFWIK. Residues 483–486 are Cytoplasmic-facing; sequence GDFG. The chain crosses the membrane as a helical span at residues 487–507; sequence IHRVCQVLFRLNFLVVVLCIV. The Lumenal segment spans residues 508–513; the sequence is MDRPYQ. The chain crosses the membrane as a helical span at residues 514 to 534; sequence FYYFVPLVTVWFMVIYVTLAL. Residues 535–546 lie on the Cytoplasmic side of the membrane; that stretch reads WPQITQKKANGN. Residues 547–567 form a helical membrane-spanning segment; that stretch reads FFWYLGLLLKLGLLLLCIWFL. The Lumenal portion of the chain corresponds to 568–599; that stretch reads AYSQGAFEKIFSLWPLSKCFELEGSVYEWWFR. A helical transmembrane segment spans residues 600–620; that stretch reads WRLDRYVVFHGVLFAFIYLAL. Residues 621–638 lie on the Cytoplasmic side of the membrane; that stretch reads QRRQILSEGKGEPLFSNK. The chain crosses the membrane as a helical span at residues 639–659; that stretch reads ISNFLLFVSVVSFLTYSIWAS. Residues 660 to 671 lie on the Lumenal side of the membrane; sequence SCKNKAECNELH. A helical transmembrane segment spans residues 672–692; the sequence is PSVSVVQIVAFILIRNIPGYA. Over 693-698 the chain is Cytoplasmic; that stretch reads RSIYSS. The helical transmembrane segment at 699-719 threads the bilayer; the sequence is FFAWFGKISLELFICQYHIWL. The Lumenal segment spans residues 720–725; it reads AADTRG. The chain crosses the membrane as a helical span at residues 726-746; sequence ILVLIPGNPTLNIIVSTFIFV. Residues 747–770 are Cytoplasmic-facing; the sequence is CVAHEISQITTDLAQVVIPKDNPS. The chain crosses the membrane as a helical span at residues 771-791; the sequence is LFRRLACTIAFFGGVLILSSI. At 792–797 the chain is on the lumenal side; the sequence is QDKSRL.

It belongs to the PC-esterase family. CASD1 subfamily. N-glycosylated. As to expression, ubiquitously expressed.

It is found in the golgi apparatus membrane. It carries out the reaction CMP-N-acetyl-beta-neuraminate + acetyl-CoA = CMP-N-acetyl-9-O-acetyl-beta-neuraminate + CoA. The catalysed reaction is a ganglioside GD3 (d18:1(4E)) + acetyl-CoA = a ganglioside Ac-O-7-GD3(d18:1(4E)) + CoA. The enzyme catalyses CMP-N-acetyl-beta-neuraminate + acetyl-CoA = CMP-N-acetyl-7-O-acetyl-beta-neuraminate + CoA. Its function is as follows. Key enzyme in the biosynthesis of O-acetylated (O-Ac) sialoglycans such as gangliosides O-AcGD3 and O-AcGD2, which affect various processes such as cell-cell interactions, host-pathogen recognition. Catalyzes the transfer of an acetyl group from a donor, the acetyl-coenzyme-A molecule (acetyl-CoA), to the C7/8/9 OH-position of a sialic acid residue. The primary site of O-acetyl group transfer on sialic acid seems to depend on cell type and can be C7, from which the O-acetyl group could subsequently migrate to the C8 and then to the C9 position, or at C9 with possibility of migrating to the C8 and then to the C7 position. Together with ST8SIA1 (GD3 synthase) it increases the levels of ganglioside Ac-O-7-GD3. Can transfer the acetyl group from acetyl-CoA to free sialate (N-acetylneuraminate, Neu5Ac) in vitro, but has preferred substrate specificity for CMP-activated sialate (CMP-Neu5Ac), resulting in the formation of 9-O-acetylated CMP-Neu5Ac (CMP-Neu5,9Ac2). CMP-Neu5,9Ac2 may be used by sialyltransferases as a sialate donor for glycoconjugate acceptors such as ganglioside GD3. O-acetylation at position C9 of ganglioside GD3 can counteract the pro-apoptotic effects of the ganglioside GD3 in tumor cells. This Mus musculus (Mouse) protein is N-acetylneuraminate (7)9-O-acetyltransferase.